A 24-amino-acid chain; its full sequence is Tryptophanase operon leader peptide (24 aa).

The polypeptide is Tryptophanase operon leader peptide (tnaL) (Escherichia coli O157:H7).